The following is a 336-amino-acid chain: uncharacterized protein (336 aa).

The tract at residues A162–D195 is disordered. Low complexity predominate over residues S169–T187.

Belongs to the AHA1 family.

This is an uncharacterized protein from Schizosaccharomyces pombe (strain 972 / ATCC 24843) (Fission yeast).